The following is a 237-amino-acid chain: Large ribosomal subunit protein uL1 (237 aa).

Belongs to the universal ribosomal protein uL1 family. As to quaternary structure, part of the 50S ribosomal subunit.

Binds directly to 23S rRNA. The L1 stalk is quite mobile in the ribosome, and is involved in E site tRNA release. In terms of biological role, protein L1 is also a translational repressor protein, it controls the translation of the L11 operon by binding to its mRNA. This chain is Large ribosomal subunit protein uL1, found in Thermosynechococcus vestitus (strain NIES-2133 / IAM M-273 / BP-1).